A 607-amino-acid polypeptide reads, in one-letter code: Elongation factor 4 (607 aa).

Residues 11–193 (ENIRNFSIIA…KIVDVVPAPD (183 aa)) enclose the tr-type G domain. GTP is bound by residues 23–28 (DHGKST) and 140–143 (NKID).

This sequence belongs to the TRAFAC class translation factor GTPase superfamily. Classic translation factor GTPase family. LepA subfamily.

It localises to the cell membrane. It catalyses the reaction GTP + H2O = GDP + phosphate + H(+). Its function is as follows. Required for accurate and efficient protein synthesis under certain stress conditions. May act as a fidelity factor of the translation reaction, by catalyzing a one-codon backward translocation of tRNAs on improperly translocated ribosomes. Back-translocation proceeds from a post-translocation (POST) complex to a pre-translocation (PRE) complex, thus giving elongation factor G a second chance to translocate the tRNAs correctly. Binds to ribosomes in a GTP-dependent manner. In Staphylococcus epidermidis (strain ATCC 35984 / DSM 28319 / BCRC 17069 / CCUG 31568 / BM 3577 / RP62A), this protein is Elongation factor 4.